A 110-amino-acid polypeptide reads, in one-letter code: Putative packaging signal terminase (110 aa).

2 consecutive DNA-binding regions (H-T-H motif) follow at residues 12–31 (SNAV…ATHA) and 27–46 (SATH…NVKA).

This protein may possess the specific endonuclease activity required for cleavage at the pac site. The protein is Putative packaging signal terminase of Vibrio phage CP-T1 (Bacteriophage CP-T1).